Here is a 258-residue protein sequence, read N- to C-terminus: MENTVVIKCGGSVLDELSPAFFASVKTMREQGMNVVIVHGGGPEIGKMLKQLNVRSEFVNGLRKTTKEVLAVVEMVLSGKVNKQLVTMFKQHGLPAVGISGVDGGLLEAEPIDGIKLGYVGRVTAVRVDLLQTLLAANYIPVISPLGVGRSGQTYNINADTAAGAIAAAIGANQLAFVTNVPGLLQDGTLIGEATAETVEQLLKDGVITGGMIPKVKAALSALSDALPKVMIVSGKTPFYEQGTWHGTTIRKEVGAYL.

Substrate-binding positions include 41–42 (GG), Arg63, and Asn156.

Belongs to the acetylglutamate kinase family. ArgB subfamily.

The protein localises to the cytoplasm. It catalyses the reaction N-acetyl-L-glutamate + ATP = N-acetyl-L-glutamyl 5-phosphate + ADP. It functions in the pathway amino-acid biosynthesis; L-arginine biosynthesis; N(2)-acetyl-L-ornithine from L-glutamate: step 2/4. Functionally, catalyzes the ATP-dependent phosphorylation of N-acetyl-L-glutamate. This is Acetylglutamate kinase from Geobacillus thermodenitrificans (strain NG80-2).